The sequence spans 333 residues: MEERLVSGDVHREDVSLEYSLRPKFLHEYIGQDKVKDNLKVFIEAAKMREETLDHVLLYGPPGLGKTTLAAIIANEMGVHLRTTSGPAIERPGDLAAILTSLEPGDVLFIDEIHRLHRSVEEVLYPAMEDYCLDIIIGKGQTARSIRIDLPPFTLVGATTRAGALSAPLRDRFGVISRLEYYTTEHLTQIVMRTAEILHVDITAEAAVEIARRSRGTPRIANRLLRRVRDFAQVRGDGTITFLLAKEALELLQVDRLGLDHIDHKLIKAIMEKFGGGPVGIDTIAATIGEEAQTIEDVYEPYLLQIGFLQRTPRGRIVTPIAYEHFGMEVPKQ.

Positions 1-182 (MEERLVSGDV…FGVISRLEYY (182 aa)) are large ATPase domain (RuvB-L). ATP contacts are provided by residues leucine 21, arginine 22, glycine 63, lysine 66, threonine 67, threonine 68, 129–131 (EDY), arginine 172, tyrosine 182, and arginine 219. Threonine 67 contacts Mg(2+). The segment at 183 to 253 (TTEHLTQIVM…LAKEALELLQ (71 aa)) is small ATPAse domain (RuvB-S). Residues 256–333 (RLGLDHIDHK…EHFGMEVPKQ (78 aa)) are head domain (RuvB-H). Arginine 311 and arginine 316 together coordinate DNA.

This sequence belongs to the RuvB family. As to quaternary structure, homohexamer. Forms an RuvA(8)-RuvB(12)-Holliday junction (HJ) complex. HJ DNA is sandwiched between 2 RuvA tetramers; dsDNA enters through RuvA and exits via RuvB. An RuvB hexamer assembles on each DNA strand where it exits the tetramer. Each RuvB hexamer is contacted by two RuvA subunits (via domain III) on 2 adjacent RuvB subunits; this complex drives branch migration. In the full resolvosome a probable DNA-RuvA(4)-RuvB(12)-RuvC(2) complex forms which resolves the HJ.

It is found in the cytoplasm. It catalyses the reaction ATP + H2O = ADP + phosphate + H(+). Its function is as follows. The RuvA-RuvB-RuvC complex processes Holliday junction (HJ) DNA during genetic recombination and DNA repair, while the RuvA-RuvB complex plays an important role in the rescue of blocked DNA replication forks via replication fork reversal (RFR). RuvA specifically binds to HJ cruciform DNA, conferring on it an open structure. The RuvB hexamer acts as an ATP-dependent pump, pulling dsDNA into and through the RuvAB complex. RuvB forms 2 homohexamers on either side of HJ DNA bound by 1 or 2 RuvA tetramers; 4 subunits per hexamer contact DNA at a time. Coordinated motions by a converter formed by DNA-disengaged RuvB subunits stimulates ATP hydrolysis and nucleotide exchange. Immobilization of the converter enables RuvB to convert the ATP-contained energy into a lever motion, pulling 2 nucleotides of DNA out of the RuvA tetramer per ATP hydrolyzed, thus driving DNA branch migration. The RuvB motors rotate together with the DNA substrate, which together with the progressing nucleotide cycle form the mechanistic basis for DNA recombination by continuous HJ branch migration. Branch migration allows RuvC to scan DNA until it finds its consensus sequence, where it cleaves and resolves cruciform DNA. This chain is Holliday junction branch migration complex subunit RuvB, found in Geobacillus sp. (strain WCH70).